Here is a 293-residue protein sequence, read N- to C-terminus: D-psicose 3-epimerase (293 aa).

Positions 6 and 107 each coordinate substrate. Catalysis depends on Glu-150, which acts as the Proton donor/acceptor. Residue Glu-150 participates in Mn(2+) binding. Substrate is bound by residues Glu-156 and Asp-183 to His-186. Mn(2+) contacts are provided by Asp-183 and His-209. Position 215 (Arg-215) interacts with substrate. The active-site Proton donor/acceptor is Glu-244. Mn(2+) is bound at residue Glu-244.

It belongs to the hyi family. As to quaternary structure, homotetramer. Mn(2+) is required as a cofactor. The cofactor is Co(2+).

It carries out the reaction D-allulose = keto-D-fructose. Its function is as follows. Involved in the biosynthesis of D-psicose. Catalyzes the reversible epimerization of D-fructose at the C3 position to yield D-psicose. The enzyme is highly specific for D-psicose and shows very low activity with D-tagatose. The sequence is that of D-psicose 3-epimerase from Ruminiclostridium cellulolyticum (strain ATCC 35319 / DSM 5812 / JCM 6584 / H10) (Clostridium cellulolyticum).